Consider the following 839-residue polypeptide: Genome polyprotein (839 aa).

Residues 55–66 (TAEVGSHQSEPL) show a composition bias toward polar residues. The interval 55 to 76 (TAEVGSHQSEPLKTSVDKPGSK) is disordered. 2 short sequence motifs ((L)YPX(n)L motif) span residues 167–171 (YPHGL) and 200–205 (YPVWEL). A compositionally biased stretch (polar residues) spans 496–510 (SGGFSTTVSTEQNVP). Disordered regions lie at residues 496–530 (SGGF…NKGK) and 773–792 (GDLE…RFES). Positions 766 to 836 (MLDRIAGGDL…RKLKGLFSQS (71 aa)) are involved in P1-2A pentamerization. Residues 780–792 (DDPRTDEDRRFES) are compositionally biased toward basic and acidic residues.

This sequence belongs to the picornaviridae polyprotein family. In terms of assembly, homodimer. Homomultimer; probably interacts with membranes in a multimeric form. Seems to assemble into amyloid-like fibers. Homopentamer. Homooligomer. As to quaternary structure, interacts with capsid protein VP2. Interacts with capsid protein VP3. In terms of assembly, interacts with capsid protein VP1. Interacts with capsid protein VP3. Interacts with capsid protein VP1. Interacts with capsid protein VP2. Specific enzymatic cleavages by viral protease in vivo yield a variety of precursors and mature proteins. Polyprotein processing intermediates are produced, such as P1-2A which is a functional precursor of the structural proteins, VP0 which is a VP4-VP2 precursor, VP1-2A precursor, 3ABC precursor which is a stable and catalytically active precursor of 3A, 3B and 3C proteins, 3AB and 3CD precursors. The assembly signal 2A is removed from VP1-2A by a host protease, possibly host Cathepsin L. This cleavage occurs over a region of 3 amino-acids probably generating VP1 proteins with heterogeneous C-termini. Post-translationally, during virion maturation, immature virions are rendered infectious following cleavage of VP0 into VP4 and VP2. This maturation seems to be an autocatalytic event triggered by the presence of RNA in the capsid and is followed by a conformational change of the particle. In terms of processing, the assembly signal 2A is removed from VP1-2A by a host protease, possibly host Cathepsin L in naked virions. This cleavage does not occur in enveloped virions. This cleavage occurs over a region of 3 amino-acids probably generating VP1 proteins with heterogeneous C-termini. Unlike other picornaviruses, does not seem to be myristoylated.

It is found in the virion. The protein resides in the host endosome. Its subcellular location is the host multivesicular body. It localises to the host membrane. In terms of biological role, capsid proteins VP1, VP2, and VP3 form a closed capsid enclosing the viral positive strand RNA genome. All these proteins contain a beta-sheet structure called beta-barrel jelly roll. Together they form an icosahedral capsid (T=3) composed of 60 copies of each VP1, VP2, and VP3, with a diameter of approximately 300 Angstroms. VP1 is situated at the 12 fivefold axes, whereas VP2 and VP3 are located at the quasi-sixfold axes. The naked capsid interacts with the host receptor HAVCR1 to provide virion attachment to and probably entry into the target cell. Functionally, VP0 precursor is a component of the immature procapsids. Its function is as follows. Plays a role in the assembly of the 12 pentamers into an icosahedral structure. Has not been detected in mature virions, supposedly owing to its small size. Precursor component of immature procapsids that corresponds to an extended form of the structural protein VP1. After maturation, possibly by the host Cathepsin L, the assembly signal 2A is cleaved to give rise to the mature VP1 protein. In terms of biological role, affects membrane integrity and causes an increase in membrane permeability. Functionally, functions as a viroporin. Affects membrane integrity and causes an increase in membrane permeability. Involved in host intracellular membrane rearrangements probably to give rise to the viral factories. Does not disrupt calcium homeostasis or glycoprotein trafficking. Antagonizes the innate immune response of the host by suppressing IFN-beta synthesis, which it achieves by interfering with the RIG-I/IFIH1 pathway. The sequence is that of Genome polyprotein from Callithrix (Owl-faced monkey).